We begin with the raw amino-acid sequence, 530 residues long: Inactive ubiquitin carboxyl-terminal hydrolase 17-like protein 7 (530 aa).

The 296-residue stretch at 80 to 375 folds into the USP domain; that stretch reads AGLQKIGNTF…QAYVLFYIQK (296 aa). Positions 382 to 392 are enriched in basic and acidic residues; that stretch reads SESVSRGREPR. 3 disordered regions span residues 382-412, 431-454, and 490-530; these read SESV…KRDH, ESTL…NVRK, and SSTK…LVCQ. Residues 490 to 512 are compositionally biased toward polar residues; sequence SSTKPTDQESMNTGTLASLQGST. Residues 513–524 show a composition bias toward basic residues; it reads RRSKGNNKHSKR.

This sequence belongs to the peptidase C19 family. USP17 subfamily.

It localises to the nucleus. Its subcellular location is the endoplasmic reticulum. The sequence is that of Inactive ubiquitin carboxyl-terminal hydrolase 17-like protein 7 (USP17L7) from Homo sapiens (Human).